A 596-amino-acid polypeptide reads, in one-letter code: Nuclear receptor subfamily 2 group C member 2 (596 aa).

At serine 19 the chain carries Phosphoserine; by MAPK. The residue at position 46 (serine 46) is a Phosphoserine. Residues serine 55 and serine 68 each carry the phosphoserine; by MAPK modification. Serine 98 bears the Phosphoserine mark. Residues 114-189 constitute a DNA-binding region (nuclear receptor); the sequence is VEYCVVCGDK…MGMKMESVQS (76 aa). NR C4-type zinc fingers lie at residues 117 to 137 and 153 to 177; these read CVVCGDKASGRHYGAVSCEGC and CRSSQDCIINKHHRNRCQFCRLKKC. Lysine 192 is covalently cross-linked (Glycyl lysine isopeptide (Lys-Gly) (interchain with G-Cter in SUMO2)). Serine 219 carries the post-translational modification Phosphoserine. Lysine 231 carries the post-translational modification N6-acetyllysine. An NR LBD domain is found at 341 to 583; the sequence is GSIHVISRDQ…SIIPYILKME (243 aa).

Belongs to the nuclear hormone receptor family. NR2 subfamily. Homodimer; can bind DNA as homodimer. Heterodimer; binds DNA as a heterodimer with NR2C1 required for chromatin remodeling and for binding to promoter regions such as globin DR1 repeats. Interacts with NR2C2AP; the interaction represses selective NR2C2-mediated transcriptional activity. Interacts with PCAF; the interaction preferentially occurs on the non-phosphorylated form and induces NR2C2-mediated transactivation activity and does not require the ligand-binding domain. Interacts (MAPK-mediated phosphorylated form) with NRIP1; the interaction promotes repression of NR2C2-mediated activity. Interacts with NLRP10. Interacts (via ligand-binding region) with transcriptional corepressor JAZF1; the interaction promotes NR2C2-mediated transcriptional repression. In terms of processing, phosphorylation on Ser-19 and Ser-68 is an important regulator of NR2C2-mediated transcriptional activity. Phosphorylation on these residues recruits the corepressor, NRIP1, leading to transcripional repression, whereas the non-phosphorylated form preferentially recruits the coactivator, PCAF. Expressed, during embryogenesis, in perichondrium, developing glomeruli structures and tubules of kidney, as well as in intestiinal villi. Also expressed in lung and hair follicles.

It is found in the nucleus. Its function is as follows. Orphan nuclear receptor that can act as a repressor or activator of transcription. An important repressor of nuclear receptor signaling pathways such as retinoic acid receptor, retinoid X, vitamin D3 receptor, thyroid hormone receptor and estrogen receptor pathways. May regulate gene expression during the late phase of spermatogenesis. Activates transcriptional activity of LHCG and is antagonist of PPARA-mediated transactivation. Together with NR2C1, forms the core of the DRED (direct repeat erythroid-definitive) complex that represses embryonic and fetal globin transcription including that of GATA1. Binds to hormone response elements (HREs) consisting of two 5'-AGGTCA-3' half site direct repeat consensus sequences. Plays a fundamental role in early embryonic development and embryonic stem cells. Required for normal spermatogenesis and cerebellum development. Appears to be important for neurodevelopmentally regulated behavior. The polypeptide is Nuclear receptor subfamily 2 group C member 2 (Nr2c2) (Mus musculus (Mouse)).